A 71-amino-acid polypeptide reads, in one-letter code: General transcription factor IIH subunit 5 (71 aa).

Residue T69 is modified to Phosphothreonine.

Belongs to the TFB5 family. Component of the 7-subunit TFIIH core complex composed of XPB/ERCC3, XPD/ERCC2, GTF2H1, GTF2H2, GTF2H3, GTF2H4 and GTF2H5, which is active in NER. The core complex associates with the 3-subunit CDK-activating kinase (CAK) module composed of CCNH/cyclin H, CDK7 and MNAT1 to form the 10-subunit holoenzyme (holo-TFIIH) active in transcription. Part of TBP-based Pol II pre-initiation complex (PIC), in which Pol II core assembles with general transcription factors and other specific initiation factors including GTF2E1, GTF2E2, GTF2F1, GTF2F2, TCEA1, ERCC2, ERCC3, GTF2H2, GTF2H3, GTF2H4, GTF2H5, GTF2A1, GTF2A2, GTF2B and TBP; this large multi-subunit PIC complex mediates DNA unwinding and targets Pol II core to the transcription start site where the first phosphodiester bond forms.

The protein resides in the nucleus. The protein localises to the cytoplasm. Its function is as follows. Component of the general transcription and DNA repair factor IIH (TFIIH) core complex, which is involved in general and transcription-coupled nucleotide excision repair (NER) of damaged DNA and, when complexed to CAK, in RNA transcription by RNA polymerase II. In NER, TFIIH acts by opening DNA around the lesion to allow the excision of the damaged oligonucleotide and its replacement by a new DNA fragment. In transcription, TFIIH has an essential role in transcription initiation. When the pre-initiation complex (PIC) has been established, TFIIH is required for promoter opening and promoter escape. Phosphorylation of the C-terminal tail (CTD) of the largest subunit of RNA polymerase II by the kinase module CAK controls the initiation of transcription. Necessary for the stability of the TFIIH complex and for the presence of normal levels of TFIIH in the cell. This chain is General transcription factor IIH subunit 5, found in Homo sapiens (Human).